The primary structure comprises 119 residues: Large ribosomal subunit protein bL20 (119 aa).

This sequence belongs to the bacterial ribosomal protein bL20 family.

Functionally, binds directly to 23S ribosomal RNA and is necessary for the in vitro assembly process of the 50S ribosomal subunit. It is not involved in the protein synthesizing functions of that subunit. This is Large ribosomal subunit protein bL20 from Shewanella halifaxensis (strain HAW-EB4).